The following is a 212-amino-acid chain: ATP phosphoribosyltransferase (212 aa).

Belongs to the ATP phosphoribosyltransferase family. Short subfamily. Heteromultimer composed of HisG and HisZ subunits.

Its subcellular location is the cytoplasm. The enzyme catalyses 1-(5-phospho-beta-D-ribosyl)-ATP + diphosphate = 5-phospho-alpha-D-ribose 1-diphosphate + ATP. It functions in the pathway amino-acid biosynthesis; L-histidine biosynthesis; L-histidine from 5-phospho-alpha-D-ribose 1-diphosphate: step 1/9. In terms of biological role, catalyzes the condensation of ATP and 5-phosphoribose 1-diphosphate to form N'-(5'-phosphoribosyl)-ATP (PR-ATP). Has a crucial role in the pathway because the rate of histidine biosynthesis seems to be controlled primarily by regulation of HisG enzymatic activity. This chain is ATP phosphoribosyltransferase, found in Geobacter metallireducens (strain ATCC 53774 / DSM 7210 / GS-15).